A 233-amino-acid chain; its full sequence is Biosynthetic peptidoglycan transglycosylase (233 aa).

Residues 8–28 (LIALPVGIFIFFNAYVYGNII) traverse the membrane as a helical segment.

The protein belongs to the glycosyltransferase 51 family.

The protein resides in the cell inner membrane. The enzyme catalyses [GlcNAc-(1-&gt;4)-Mur2Ac(oyl-L-Ala-gamma-D-Glu-L-Lys-D-Ala-D-Ala)](n)-di-trans,octa-cis-undecaprenyl diphosphate + beta-D-GlcNAc-(1-&gt;4)-Mur2Ac(oyl-L-Ala-gamma-D-Glu-L-Lys-D-Ala-D-Ala)-di-trans,octa-cis-undecaprenyl diphosphate = [GlcNAc-(1-&gt;4)-Mur2Ac(oyl-L-Ala-gamma-D-Glu-L-Lys-D-Ala-D-Ala)](n+1)-di-trans,octa-cis-undecaprenyl diphosphate + di-trans,octa-cis-undecaprenyl diphosphate + H(+). It functions in the pathway cell wall biogenesis; peptidoglycan biosynthesis. Its function is as follows. Peptidoglycan polymerase that catalyzes glycan chain elongation from lipid-linked precursors. The sequence is that of Biosynthetic peptidoglycan transglycosylase from Neisseria gonorrhoeae (strain NCCP11945).